Consider the following 745-residue polypeptide: Cytoplasmic polyadenylation element-binding protein 3 (745 aa).

Disordered regions lie at residues 1–45, 94–180, and 204–283; these read MNLN…KSPT, VGSK…TNNS, and NKAN…FGEL. The span at 162-175 shows a compositional bias: basic and acidic residues; the sequence is LNFERDAEQKKDST. Residues 219–229 show a composition bias toward polar residues; it reads ETPTDSPQKGF. Residues 230-240 show a composition bias toward low complexity; it reads SSSTESSPSDS. A compositionally biased stretch (polar residues) spans 241-255; it reads MNQFPSREHFTSANE. Positions 264–276 are enriched in basic and acidic residues; that stretch reads FQQEHGNKNRDSD. The 23-residue stretch at 297–319 folds into the RRM domain; sequence IFVGGVPWDITEAALKDSFGEFG.

Its function is as follows. Cytoplasmic polyadenylation element binding protein that binds to and regulates the translation of specific mRNAs. May not be required for oogenesis. This chain is Cytoplasmic polyadenylation element-binding protein 3 (cpb-3), found in Caenorhabditis elegans.